Reading from the N-terminus, the 79-residue chain is Acyl carrier protein (79 aa).

One can recognise a Carrier domain in the interval 4 to 79 (EQILVDVQEA…DVVAYIETKL (76 aa)). At serine 39 the chain carries O-(pantetheine 4'-phosphoryl)serine.

This sequence belongs to the acyl carrier protein (ACP) family. In terms of processing, 4'-phosphopantetheine is transferred from CoA to a specific serine of apo-ACP by AcpS. This modification is essential for activity because fatty acids are bound in thioester linkage to the sulfhydryl of the prosthetic group.

The protein localises to the cytoplasm. Its pathway is lipid metabolism; fatty acid biosynthesis. In terms of biological role, carrier of the growing fatty acid chain in fatty acid biosynthesis. The protein is Acyl carrier protein of Exiguobacterium sp. (strain ATCC BAA-1283 / AT1b).